Here is a 352-residue protein sequence, read N- to C-terminus: Phosphate acetyltransferase (352 aa).

Belongs to the phosphate acetyltransferase and butyryltransferase family.

Its subcellular location is the cytoplasm. The enzyme catalyses acetyl-CoA + phosphate = acetyl phosphate + CoA. Its pathway is metabolic intermediate biosynthesis; acetyl-CoA biosynthesis; acetyl-CoA from acetate: step 2/2. This chain is Phosphate acetyltransferase (pta), found in Borreliella burgdorferi (strain ATCC 35210 / DSM 4680 / CIP 102532 / B31) (Borrelia burgdorferi).